Here is a 4043-residue protein sequence, read N- to C-terminus: MGSFQNSSEPIAIIGTGCRFPGGCDSPSKLWELLRAPRDLLKEIPESRFSVDSFYHPDNAHHGTSNVRHSYFLEEDLRQFDVQFFGIKPIEANAVDPQQRLLLETVYEGLESAGLSIQRLQGSDTAVYVGVMSADFTDLVGRDTETFPTYFATGTARSILSNRLSYFFDWHGPSLTIDTACSSSLIAMHHAVQTLRSGDSSLAIVAGSNLILGPEQYIAESKLQMLSPTGRSRMWDAAADGYARGEGVAAIVLKRLSQAIADGDHIECVIRETGVNQDGKTPGITMPSATAQAALIRSTYAKAGLDLSNRSDRPQYFEAHGTGTPAGDPIEARAIQTAFFGPDLNFTADSRKDTLFVGSIKTVVGHTEGTAGLAAVIKASLALQSGTIPPNRLLEQLNPAIKPFYNSLKILAAAEDWPQLSRGGVRRVSVNSFGFGGANSHAILESYEPSLHSHKGTRDISFSPFTFSAASETALVASLRAYRDLLSTRSDVRLTDLAWTLNSRRSTLASRVAIAASDKDDLVLKLDDRAENYDGSDTFMDAGHRKPNANELRILGVFTGQGAQWARMGAELIEQCPGASKVVDALEQSLRSLPPQDRPTWSLREQLLAPPSSSMVSTASISQPLCTAIQIMLVDMLREAGIQFSAVVGHSSGEIGAAYAAGCLSAKDAIRVAYYRGVHLKSALQKGSMLAVGTTFEDAQDLCNLPTFEDRLCVAASNSPSSVTISGDSDAIEEIKVVFDEEKKFTRLLKVDRAYHSHHMQDCVEPYVRSLRQCSVTFRPPNRNQCVWISSVFVQDIHQLSEDGSDRYWGSNLARPVMFAEALQLLLSLEGSFDLAVEVGPHPALKGPASQTIQDALGYSIPYTGVLSRGNSDVEAFAAALGSIWTAFGDGAVDFSRLQKFTSGSAAQPQLLKGLPTYQWDHNRVFWHESRVSKAFRTRKDVPNELLGRQVLDGAPNQLRWRNILRPREIAWLEGHQVQGQMVFPCAGYVSACAEASMRLAVGQNVESIELEEFVVGQAIVFNDSNSEVETLATLTEVVHRQQTISANFAFYSCPTGGESLELVRNASCRLRITVGDSAVDLLQPQAEADFALLEVESDRFYNALGQLGFGYTGPFRSLTALKRKLGIARGLIENAPPSFNHSQPLLIHPATLDAAIQSIMLAYCYPGDSMLRAIHLPTGIEKLTLNPVNCLKFAGQSVQVPFDSSASTGSGRSLQGDVSIYSLDGSRAVQLEGLQTQPLSSPTEASDLNIFTELVWGVDRPDCEEILRTTVVEDFDAELLFSLERVAYFYLRSLGEAVPERERNGLEWHHKRLFAYVDHVLSRVARGVNRFARPEWAADSKNDILKILQKYPDNIDLRLMRAVGENLPAVVRGQLTMLEPMIQDNMLNDFYVIAHGMPRYTKYLAAMASQISHRYPHMNVLEIGAGTGGATKSFLKELGEGFSTYTFTDISSGFFEKASQVFASYSAKMNFKVLDIEKDIESQGFAPESFDLIIASLVLHATRDLAQTVRNVRRLLKPGGYLLLLEITENEQMRFGLIFGGLPGWWLGYEDGRPFSPCVDIEEWSRVLEQNGFSGIETAIPHHDTLPAPLSVIVSQAVNEKVQFLHNPLDSIRGSTVIPRLTIIGGGGRRSAQLIDAVSSLVQPQCGQLRVVDSLQKICSEVLPVGGSVLSLTDFDEPVFKSMDADKLRGFQEIFKQSKNVLWVTQGSRSGDPYARMVVGFGRTIVLEMLHLRLQFLDVSPSSSPDASAIAEAMLRLEVSGSWEDEGAEDGAVLHSVEPELSISDGRCWVPRFKPNKEQNERYNSVRRSIETEQSFSDTCVELVYRDNSLSLLEVTHSSSEPLAEPSTKYLELDVNYSVSKAVEVVPGCYLFLILGRDTDTGDRFIALSPKQSSRVRIPRALVLPQHTSHGTINENSLDAFFHEIVARSILRDVPYGSAAIALQPNSLLADALREAAQDKGVTLHLWSTQASDLESEWTYIHRKASKTEVQNAIPRNVTCFFDMGGDESIATKILACLPDHTQAKKEASITAHEAHLIPTVLPDIRSLLMDIGRAMRTRGKSSSPDLRIVDLTDIVKGQADSETSIINWLESSSRVPVAVEPIEARVQFRSDRTYWLVGLTGGLGLSLCEWMAQQGARYIVLSSRSPKVDGRWLAKMNRMGVTVEVVANDISNRDSVQRVYNKIRTELPPISGVAQGAMVLHDTMFLDLDMERMNKVLRPKVDGSTYLEEIFHDTELEFFVFFSSMAAVTGNPGQSAYAAANMFMASLANQRRQRGLNASAVHIGAIFGNGYVTRELTLVQQEFLRKVGNLWLSEHDFRRLFAEAVYAGRHHRGRSPELSTGLKILESDESESITWFNNPVFQHCIKQSGRVDLISETSTSAAPVKVRLAEASSSADIYDIISDAFVTKLKTSLQVEGDRPIVDLTADTLGIDSLVAVDIRSWFIKELQVEIPVLKILSGATVGEMVTQAQELLPKELTPNLDPNAEAKPSKPKNTVQPKQQTKKTIQLQNVAKAPQPALSQQVSSGVQNMIKTNPPKEAEAKQPRPEVKQAAPKDSQYPTALETPSKLQDPSRNIVVAKDLAAEEKHLTDQEPVPSNMSSSSWSEIDESEGKVETSSSSSSTSASQIITKTKPVEVKKSVPMAFGQSRFWFLRHYLEDPSSFNITVSIQLDGPLKIDHFARAVQVVGQRHEALRTRFVTDEAQGTTKQEVLALSNLTLEERTISTDEEAEGVYQELKGYAFDLEKGENIRIILLKRSNRSFTLIIAYHHINMDGVSLEVLLRDLQMAYDSKFLSPRILQYADFSEQQRRDYQSGKWAEDLAFWKKEFQTMPGPLPLLSMARTSTRSPLTAYKTHSAEFHIDPATLDTIQSTCQRMKVTPFHFHLAVFYTMLIRLVDVENLCIGISSANRSQQDTLQSVGLYLNLLPLNFTPQLDQTFTNVLHIVREKSVQAFAHSKVPFDVIVNELGAARSATHSPLFQVLVNYRAGVSERRSFCNCDSKVLTFEQGQTPYDLSLDVIDNPGGDCHVIMAGQSVLYGAEHVAVLRGVYQNLLVAFSRNPALRLNVPPLYDTDEVKHAIKLGHGPAYNYQWPATIPERIDEIVERYPTHVALIDGDGRKMSYTEMARRVNTLAVVLLRQDIGQGSKVGVFMEPGSSWICSLLAILRLDAIYIPLDSRMGLDRLSTIVRDCKPDLLLVDNTTLSNVALLGLSCPTLNVDVVSPGSDQQHVPNTAQPSSTAVIMYTSGSTGVPKGIVMQHHTFRNNIETSTEKWDFREGRETTLQQSSYSFDMSLSQTFLTLSNGGTLRIVPKKLRGDPKAIASLITAEGITFTETTPSEYISWLRYGDVDDLRKSKWRIAVSGGETITTNLTGLLRQLEKSDLRLIDCYGPTEITFCSHGREVQYDGEGDILSPAFRTWPNYSVYIVDSHMKPVPIGIPGEILIGGAGVVAGYVHSELDARGFARNNFMNTMFLENAWTRLHRTGDFGRLDQEGNLILGGRIAGDTQVKLRGIRIDLQEIESAILSSGDGKIVDAAVTVRESADSGSEYLMAFVTTLDAGDLSLERIRQELPLPQHMRPANIITLDQLPMTASNKVDRLALKSLPLPPGSHVADTGTDESPSMAKMRDVWATVIPQEVLAHFELGPASNFFQVGGDSMLLVRLQTEINKVFGTSISLFQLFDASSLTGMVSLIDHSESTSQRSEVDWETETTISPSLLQVPATKRFFAHPAVVVLTGATGFLGRAIVNRLLKDCSVQKIHCVAVRRDPSSLPDDFKSPKVVLHRGDLTLPQLGLTDRAATEIFAEADAVIHNGADVSFMKTYQSLKQANLEATKELVRLSAPHRLSFHYISSASVTRLAGQESFDQSSVSAFPPSAEDGYVASKWASERYLEKVSDQCGLPIWIHRPSSIVGEGAPDTDMMASLLGYSRTLRAIPQTDGWTGWLDFVSADRVAMQIADEVYEDYSWPGTVKYLYEAGDREIPLSDLRGVLERETGESFESIPLEEWVLRAEGQGLHPLLGEYLRRVSGIPLVLPRLVQQGSFF.

The region spanning 8 to 446 (SEPIAIIGTG…GANSHAILES (439 aa)) is the Ketosynthase family 3 (KS3) domain. Catalysis depends on for beta-ketoacyl synthase activity residues Cys181, His320, and His366. The interval 557-877 (VFTGQGAQWA…SRGNSDVEAF (321 aa)) is acyl transferase. The N-terminal hotdog fold stretch occupies residues 944–1078 (NELLGRQVLD…CRLRITVGDS (135 aa)). One can recognise a PKS/mFAS DH domain in the interval 944–1246 (NELLGRQVLD…TQPLSSPTEA (303 aa)). Positions 945–1243 (ELLGRQVLDG…GLQTQPLSSP (299 aa)) are dehydratase (DH) domain. The Proton acceptor; for dehydratase activity role is filled by His976. A C-terminal hotdog fold region spans residues 1093-1246 (LLEVESDRFY…TQPLSSPTEA (154 aa)). Asp1154 (proton donor; for dehydratase activity) is an active-site residue. The tract at residues 1400-1585 (RYTKYLAAMA…GIETAIPHHD (186 aa)) is methyltransferase (MT) domain. The segment at 2115-2288 (TYWLVGLTGG…NASAVHIGAI (174 aa)) is ketoreductase (KR)domain. The region spanning 2394-2475 (SSSADIYDII…EMVTQAQELL (82 aa)) is the Carrier 1 domain. The peptidyl carrier protein stretch occupies residues 2395–2472 (SSADIYDIIS…TVGEMVTQAQ (78 aa)). Ser2435 is modified (O-(pantetheine 4'-phosphoryl)serine). 2 disordered regions span residues 2476-2575 (PKEL…DPSR) and 2587-2630 (EKHL…SQII). Composition is skewed to polar residues over residues 2494-2512 (PKNT…QLQN) and 2520-2534 (ALSQ…NMIK). Residues 2537–2550 (PPKEAEAKQPRPEV) show a composition bias toward basic and acidic residues. Residues 2617 to 2627 (TSSSSSSTSAS) are compositionally biased toward low complexity. Residues 2640-3069 (KSVPMAFGQS…NPALRLNVPP (430 aa)) are condensation. An adenylation region spans residues 3102–3502 (EIVERYPTHV…EGNLILGGRI (401 aa)). The Carrier 2 domain maps to 3617 to 3697 (TDESPSMAKM…GMVSLIDHSE (81 aa)). The tract at residues 3622 to 3694 (SMAKMRDVWA…SLTGMVSLID (73 aa)) is thiolation. An O-(pantetheine 4'-phosphoryl)serine modification is found at Ser3657. Positions 3735–3954 (LTGATGFLGR…DFVSADRVAM (220 aa)) are reductase-like.

This sequence in the C-terminal section; belongs to the NRP synthetase family.

It functions in the pathway mycotoxin biosynthesis. Its function is as follows. Hybrid PKS-NRPS synthetase; part of the gene cluster that mediates the biosynthesis of the mycotoxins cytochalasins E and K. The hybrid PKS-NRPS synthetase ccsA and the enoyl reductase ccsC are responsible for fusion of phenylalanine with an octaketide backbone and subsequent release of the stable tetramic acid precursor. The polyketide synthase module (PKS) of the PKS-NRPS ccsA is responsible for the synthesis of the octaketide backbone. The downstream nonribosomal peptide synthetase (NRPS) amidates the carboxyl end of the octaketide with a phenylalanine. A reductase-like domain (R) at the C-terminus catalyzes the reductive release of the polyketide-amino acid intermediate. Because ccsA lacks a designated enoylreductase (ER) domain, the required activity is provided the enoyl reductase ccsC. Upon formation of the 11-membered carbocycle-fused perhydroisoindolone intermediate, a number of oxidative steps are required to afford the final cytochalasin E and K, including two hydroxylations at C17 and C18, one alcohol oxidation at C17, one epoxidation at C6 and C7 and two Baeyer-Villiger oxidations. The oxidative modification at C17, C18 and the C6-C7 epoxidation are likely to be catalyzed by the two cytochrome P450 oxygenases ccsD and ccsG. CcsD may be responsible for the epoxidation of the C6-C7 double bond. CcsG may be responsible for the successive oxidative modifications at C17 and C18. The double Baeyer-Villiger oxidations of ketocytochalasin to precytochalasin and cytochalasin Z(16) are among the final steps leading to cytochalasin E and K and are catalyzed by ccsB. The first oxygen insertion step follows that of the classic BVMO mechanism, generating the ester precytochalasin. Release of precytochalasin into an aqueous environment can generate the shunt product iso-precytochalasin through spontaneous isomerization. Alternatively, precytochalasin can undergo further oxidation by ccsB to yield the in-line carbonate-containing cytochalasin Z(16). Cytochalasin Z(16) is a precursor to cytochalasin E and cytochalasin K, whereas iso-precytochalasin is a precursor to cytochalasin Z(17) and rosellichalasin. The hydrolyase ccsE may catalyze hydrolysis of epoxide bond in cytochalasin E to afford cytochalasin K. The function of ccsF has not been assigned but it may play a role in post-PKS-NRPS biosynthetic step, resistance or transport of cytochalasins and related PKS-NRPS products. This chain is Polyketide synthase-nonribosomal peptide synthetase, found in Aspergillus clavatus (strain ATCC 1007 / CBS 513.65 / DSM 816 / NCTC 3887 / NRRL 1 / QM 1276 / 107).